Reading from the N-terminus, the 235-residue chain is MSSSSHRGILKTEALTKYLLETSAYPREHEQLKGLREATVEKHKYWSLMNVPVDEGLFISMLLKIMNAKKTIELGVFTGYSLLATALALPQDGKIIAVDPDKEAYQTGVPFIKKAGVEHKINFIQSDAMSVLNDLIADGKEEGTLDFAMVDADKENYLNYHELLLKLVRVGGIIAYDNTLWFGSVARSEEEEMMDFERAGRVHLMKLNKFLASDPRVELSHLSIGDGVALCRRLY.

Residues valine 51, glutamate 73, 75–76 (GV), serine 81, aspartate 99, and alanine 128 contribute to the S-adenosyl-L-methionine site. Aspartate 151 lines the a divalent metal cation pocket. Aspartate 153 is a binding site for S-adenosyl-L-methionine. Positions 177 and 178 each coordinate a divalent metal cation.

The protein belongs to the class I-like SAM-binding methyltransferase superfamily. Cation-dependent O-methyltransferase family. CCoAMT subfamily. A divalent metal cation is required as a cofactor.

Its subcellular location is the cytoplasm. It carries out the reaction S-adenosyl-L-methionine + a 3'-hydroxyflavonoid = S-adenosyl-L-homocysteine + a 3'-methoxyflavonoid.. It catalyses the reaction S-adenosyl-L-methionine + a 5'-hydroxy-3'-methoxyflavonoid = S-adenosyl-L-homocysteine + a 3',5'-dimethoxyflavonoid.. The protein operates within pigment biosynthesis; anthocyanin biosynthesis. Functionally, mediates O-methylation of anthocyanins. Anthocyanins are major pigments in grapes: at ripening initiation in red grapevine berries, the exocarp turns color from green to red and then to purple due to the accumulation and extent of methylation of anthocyanins. Catalyzes both 3' and 5' O-methylation of anthocyanins, with a preference for glycosylated substrates. Active on both anthocyanins and flavonols in vitro. Most active with delphinidin 3-glucoside but also acts on cyanidin 3-glucoside, cyanidin, myricetin, quercetin and quercetin 3-glucoside. Not able to methylate flavan type skeletons with chiral centers, such as catechins or dihydroquercetin. This is Flavonoid 3',5'-methyltransferase (FAOMT) from Vitis vinifera (Grape).